Consider the following 147-residue polypeptide: Putative protein adenylyltransferase MJ1305 (147 aa).

A GSX(10)DXD motif motif is present at residues 32–46; that stretch reads GSYARGTAVEYSDVD. Mg(2+) is bound by residues D44 and D46.

This sequence belongs to the MntA antitoxin family. Mg(2+) is required as a cofactor.

The enzyme catalyses L-tyrosyl-[protein] + ATP = O-(5'-adenylyl)-L-tyrosyl-[protein] + diphosphate. The catalysed reaction is O-(5'-adenylyl)-L-tyrosyl-[protein] + ATP = O-[5'-(adenylyl-(5'-&gt;3')-adenylyl)]-L-tyrosyl-[protein] + diphosphate. Its function is as follows. Putative antitoxin component of a putative type VII toxin-antitoxin (TA) system. Its cognate toxin might be MJ1304, which it might AMPylate. This is Putative protein adenylyltransferase MJ1305 from Methanocaldococcus jannaschii (strain ATCC 43067 / DSM 2661 / JAL-1 / JCM 10045 / NBRC 100440) (Methanococcus jannaschii).